We begin with the raw amino-acid sequence, 201 residues long: Glutathione peroxidase 1 (201 aa).

At Ser32 the chain carries Phosphoserine. The active site involves Sec47. Position 47 (Sec47) is a non-standard amino acid, selenocysteine. Lys86, Lys112, and Lys146 each carry N6-acetyllysine; alternate. N6-succinyllysine; alternate is present on residues Lys86, Lys112, and Lys146. Phosphoserine is present on residues Ser195 and Ser199.

This sequence belongs to the glutathione peroxidase family. Homotetramer. Interacts with MIEN1. During periods of oxidative stress, Sec-47 may react with a superoxide radical, irreversibly lose hydroselenide and be converted to dehydroalanine.

It localises to the cytoplasm. It is found in the mitochondrion. The catalysed reaction is 2 glutathione + H2O2 = glutathione disulfide + 2 H2O. It catalyses the reaction a hydroperoxy polyunsaturated fatty acid + 2 glutathione = a hydroxy polyunsaturated fatty acid + glutathione disulfide + H2O. The enzyme catalyses tert-butyl hydroperoxide + 2 glutathione = tert-butanol + glutathione disulfide + H2O. It carries out the reaction cumene hydroperoxide + 2 glutathione = 2-phenylpropan-2-ol + glutathione disulfide + H2O. The catalysed reaction is (13S)-hydroperoxy-(9Z,11E)-octadecadienoate + 2 glutathione = (13S)-hydroxy-(9Z,11E)-octadecadienoate + glutathione disulfide + H2O. It catalyses the reaction (9S)-hydroperoxy-(10E,12Z)-octadecadienoate + 2 glutathione = (9S)-hydroxy-(10E,12Z)-octadecadienoate + glutathione disulfide + H2O. The enzyme catalyses (5S)-hydroperoxy-(6E,8Z,11Z,14Z)-eicosatetraenoate + 2 glutathione = (5S)-hydroxy-(6E,8Z,11Z,14Z)-eicosatetraenoate + glutathione disulfide + H2O. It carries out the reaction (12S)-hydroperoxy-(5Z,8Z,10E,14Z)-eicosatetraenoate + 2 glutathione = (12S)-hydroxy-(5Z,8Z,10E,14Z)-eicosatetraenoate + glutathione disulfide + H2O. The catalysed reaction is (12R)-hydroperoxy-(5Z,8Z,10E,14Z)-eicosatetraenoate + 2 glutathione = (12R)-hydroxy-(5Z,8Z,10E,14Z)-eicosatetraenoate + glutathione disulfide + H2O. It catalyses the reaction (15S)-hydroperoxy-(5Z,8Z,11Z,13E)-eicosatetraenoate + 2 glutathione = (15S)-hydroxy-(5Z,8Z,11Z,13E)-eicosatetraenoate + glutathione disulfide + H2O. The enzyme catalyses (5S)-hydroperoxy-(6E,8Z,11Z,14Z,17Z)-eicosapentaenoate + 2 glutathione = (5S)-hydroxy-(6E,8Z,11Z,14Z,17Z)-eicosapentaenoate + glutathione disulfide + H2O. It carries out the reaction (12S)-hydroperoxy-(5Z,8Z,10E,14Z,17Z)-eicosapentaenoate + 2 glutathione = (12S)-hydroxy-(5Z,8Z,10E,14Z,17Z)-eicosapentaenoate + glutathione disulfide + H2O. The catalysed reaction is (15S)-hydroperoxy-(5Z,8Z,11Z,13E,17Z)-eicosapentaenoate + 2 glutathione = (15S)-hydroxy-(5Z,8Z,11Z,13E,17Z)-eicosapentaenoate + glutathione disulfide + H2O. It catalyses the reaction (15S)-hydroperoxy-(11Z,13E)-eicosadienoate + 2 glutathione = (15S)-hydroxy-(11Z,13E)-eicosadienoate + glutathione disulfide + H2O. The enzyme catalyses (17S)-hydroperoxy-(4Z,7Z,10Z,13Z,15E,19Z)-docosahexaenoate + 2 glutathione = (17S)-hydroxy-(4Z,7Z,10Z,13Z,15E,19Z)-docosahexaenoate + glutathione disulfide + H2O. Functionally, catalyzes the reduction of hydroperoxides in a glutathione-dependent manner thus regulating cellular redox homeostasis. Can reduce small soluble hydroperoxides such as H2O2, cumene hydroperoxide and tert-butyl hydroperoxide, as well as several fatty acid-derived hydroperoxides. In platelets catalyzes the reduction of 12-hydroperoxyeicosatetraenoic acid, the primary product of the arachidonate 12-lipoxygenase pathway. The protein is Glutathione peroxidase 1 (GPX1) of Macaca fuscata fuscata (Japanese macaque).